Here is a 607-residue protein sequence, read N- to C-terminus: UvrABC system protein C (607 aa).

The GIY-YIG domain maps to 16–94; that stretch reads GRPGVYRMFD…IKEWRPPYNI (79 aa). In terms of domain architecture, UVR spans 203–238; the sequence is QQLGNELNAEMEKAAMALDFEKAAELRDQIALLRRV.

The protein belongs to the UvrC family. Interacts with UvrB in an incision complex.

The protein resides in the cytoplasm. Functionally, the UvrABC repair system catalyzes the recognition and processing of DNA lesions. UvrC both incises the 5' and 3' sides of the lesion. The N-terminal half is responsible for the 3' incision and the C-terminal half is responsible for the 5' incision. This Pseudomonas putida (strain ATCC 47054 / DSM 6125 / CFBP 8728 / NCIMB 11950 / KT2440) protein is UvrABC system protein C.